Consider the following 258-residue polypeptide: Imidazole glycerol phosphate synthase subunit HisF (258 aa).

Active-site residues include aspartate 11 and aspartate 130.

It belongs to the HisA/HisF family. Heterodimer of HisH and HisF.

The protein resides in the cytoplasm. The enzyme catalyses 5-[(5-phospho-1-deoxy-D-ribulos-1-ylimino)methylamino]-1-(5-phospho-beta-D-ribosyl)imidazole-4-carboxamide + L-glutamine = D-erythro-1-(imidazol-4-yl)glycerol 3-phosphate + 5-amino-1-(5-phospho-beta-D-ribosyl)imidazole-4-carboxamide + L-glutamate + H(+). Its pathway is amino-acid biosynthesis; L-histidine biosynthesis; L-histidine from 5-phospho-alpha-D-ribose 1-diphosphate: step 5/9. In terms of biological role, IGPS catalyzes the conversion of PRFAR and glutamine to IGP, AICAR and glutamate. The HisF subunit catalyzes the cyclization activity that produces IGP and AICAR from PRFAR using the ammonia provided by the HisH subunit. This is Imidazole glycerol phosphate synthase subunit HisF from Haemophilus influenzae (strain 86-028NP).